Consider the following 296-residue polypeptide: Probable AP endonuclease (296 aa).

An intrachain disulfide couples cysteine 16 to cysteine 20. Zn(2+) contacts are provided by histidine 78, histidine 115, glutamate 142, histidine 182, histidine 218, aspartate 231, histidine 233, and glutamate 271.

It belongs to the AP endonuclease 2 family. Requires Zn(2+) as cofactor.

The protein resides in the host nucleus. The protein localises to the host cytoplasm. It localises to the virion. Endonuclease that plays a role in DNA repair. Cleaves phosphodiester bonds on the 5' side of apurinic or apyrimidinic sites (AP sites). In addition to endonuclease activity, the ASFV enzyme has a proofreading 3'-5' exonuclease activity that is considerably more efficient in the elimination of a mismatch than in that of a correctly paired base. Displays 3'-phosphatase and 3'-repair diesterase activities. The single nucleotide gaps generated by the AP endonuclease are filled by the viral AP endonuclease and DNA ligase. This chain is Probable AP endonuclease, found in Ornithodoros (relapsing fever ticks).